Consider the following 491-residue polypeptide: Neuronal acetylcholine receptor subunit beta-2 (491 aa).

The first 18 residues, 1-18, serve as a signal peptide directing secretion; it reads MALLRVLCLLAALRRSLC. Residues 19-226 are Extracellular-facing; the sequence is TDTEERLVEY…ITYDFIIRRK (208 aa). 2 N-linked (GlcNAc...) asparagine glycosylation sites follow: Asn-44 and Asn-161. Cys-148 and Cys-162 are joined by a disulfide. Residues 227–251 traverse the membrane as a helical segment; sequence PLFYTINLIIPCILITSLAILVFYL. Over 252-258 the chain is Cytoplasmic; it reads PSDCGEK. The helical transmembrane segment at 259–277 threads the bilayer; sequence MTLCISVLLALTVFLLLIS. Residues 278-292 are Extracellular-facing; the sequence is KIVPPTSLDVPLVGK. Residues 293–314 traverse the membrane as a helical segment; that stretch reads YLMFTMVLVTFSIVTSVCVLNV. Residues 315–449 are Cytoplasmic-facing; sequence HHRSPTTHTM…WKYVAMVIDR (135 aa). The chain crosses the membrane as a helical span at residues 450–468; the sequence is LFLWIFVFVCVFGTVGMFL.

This sequence belongs to the ligand-gated ion channel (TC 1.A.9) family. Acetylcholine receptor (TC 1.A.9.1) subfamily. Beta-2/CHRNB2 sub-subfamily. Neuronal AChR is a heteropentamer composed of two different types of subunits: alpha and beta. CHRNB2/Beta-2 subunit can be combined to CHRNA2/alpha-2, CHRNA3/alpha-3 or CHRNA4/alpha-4, CHRNA5/alpha-5, CHRNA6/alpha-6 and CHRNB3/beta-3 to give rise to functional receptors.

The protein resides in the synaptic cell membrane. It localises to the cell membrane. The enzyme catalyses Ca(2+)(in) = Ca(2+)(out). It carries out the reaction K(+)(in) = K(+)(out). The catalysed reaction is Na(+)(in) = Na(+)(out). Activated by a myriad of ligands such as acetylcholine, cytisine, nicotine, choline and epibatidine. nAChR activity is inhibited by the antagonist alpha-conotoxins BuIA, PnIA, PnIC, GID and MII, small disulfide-constrained peptides from cone snails. Its function is as follows. Component of neuronal acetylcholine receptors (nAChRs) that function as pentameric, ligand-gated cation channels with high calcium permeability among other activities. nAChRs are excitatory neurotrasnmitter receptors formed by a collection of nAChR subunits known to mediate synaptic transmission in the nervous system and the neuromuscular junction. Each nAchR subunit confers differential attributes to channel properties, including activation, deactivation and desensitization kinetics, pH sensitivity, cation permeability, and binding to allosteric modulators. CHRNB2 forms heteropentameric neuronal acetylcholine receptors with CHRNA2, CHRNA3, CHRNA4 and CHRNA6, as well as CHRNA5 and CHRNB3 as accesory subunits. The chain is Neuronal acetylcholine receptor subunit beta-2 (CHRNB2) from Gallus gallus (Chicken).